The chain runs to 409 residues: Imidazolonepropionase (409 aa).

Fe(3+)-binding residues include histidine 70 and histidine 72. 2 residues coordinate Zn(2+): histidine 70 and histidine 72. Arginine 79, tyrosine 137, and histidine 164 together coordinate 4-imidazolone-5-propanoate. N-formimidoyl-L-glutamate is bound at residue tyrosine 137. Position 225 (histidine 225) interacts with Fe(3+). Histidine 225 contributes to the Zn(2+) binding site. Glutamine 228 is a 4-imidazolone-5-propanoate binding site. Asparagine 314 and glycine 316 together coordinate N-formimidoyl-L-glutamate. Threonine 317 contacts 4-imidazolone-5-propanoate.

This sequence belongs to the metallo-dependent hydrolases superfamily. HutI family. Zn(2+) serves as cofactor. It depends on Fe(3+) as a cofactor.

Its subcellular location is the cytoplasm. The catalysed reaction is 4-imidazolone-5-propanoate + H2O = N-formimidoyl-L-glutamate. It participates in amino-acid degradation; L-histidine degradation into L-glutamate; N-formimidoyl-L-glutamate from L-histidine: step 3/3. In terms of biological role, catalyzes the hydrolytic cleavage of the carbon-nitrogen bond in imidazolone-5-propanoate to yield N-formimidoyl-L-glutamate. It is the third step in the universal histidine degradation pathway. The sequence is that of Imidazolonepropionase from Paenarthrobacter aurescens (strain TC1).